The sequence spans 633 residues: Polypeptide N-acetylgalactosaminyltransferase 3 (633 aa).

The Cytoplasmic segment spans residues 1 to 19; it reads MAHLKRLVKLHIKRHYHKK. The chain crosses the membrane as a helical; Signal-anchor for type II membrane protein span at residues 20–37; that stretch reads FWKLGAVIFFFIIVLVLM. Residues 38 to 633 are Lumenal-facing; the sequence is QREVSVQYSK…LQKWILSQND (596 aa). N-linked (GlcNAc...) asparagine glycosylation is present at asparagine 132. The segment at 184–293 is catalytic subdomain A; sequence LPTTSVIIVF…YGWLEPLLAR (110 aa). 2 residues coordinate Mn(2+): aspartate 277 and histidine 279. An N-linked (GlcNAc...) asparagine glycan is attached at asparagine 297. The catalytic subdomain B stretch occupies residues 356 to 418; that stretch reads PIKTPTFAGG…PCSVVGHVFR (63 aa). Mn(2+) is bound at residue histidine 415. Asparagine 484 carries N-linked (GlcNAc...) asparagine glycosylation. Residues 504 to 630 form the Ricin B-type lectin domain; the sequence is VISGYIKSVG…SDPLQKWILS (127 aa). A disulfide bridge links cysteine 517 with cysteine 535. UDP-N-acetyl-alpha-D-galactosamine is bound by residues aspartate 519, glutamate 522, histidine 536, and asparagine 541. 2 disulfide bridges follow: cysteine 561–cysteine 574 and cysteine 605–cysteine 618.

The protein belongs to the glycosyltransferase 2 family. GalNAc-T subfamily. The cofactor is Mn(2+). As to expression, expressed in organs that contain secretory epithelial glands. Highly expressed in pancreas, skin, kidney and testis. Weakly expressed in prostate, ovary, intestine and colon. Also expressed in placenta and lung and fetal lung and fetal kidney.

It is found in the golgi apparatus. It localises to the golgi stack membrane. It catalyses the reaction L-seryl-[protein] + UDP-N-acetyl-alpha-D-galactosamine = a 3-O-[N-acetyl-alpha-D-galactosaminyl]-L-seryl-[protein] + UDP + H(+). The enzyme catalyses L-threonyl-[protein] + UDP-N-acetyl-alpha-D-galactosamine = a 3-O-[N-acetyl-alpha-D-galactosaminyl]-L-threonyl-[protein] + UDP + H(+). It functions in the pathway protein modification; protein glycosylation. Functionally, catalyzes the initial reaction in O-linked oligosaccharide biosynthesis, the transfer of an N-acetyl-D-galactosamine residue to a serine or threonine residue on the protein receptor. Has activity toward HIV envelope glycoprotein gp120, EA2, MUC2, MUC1A and MUC5AC. Probably glycosylates fibronectin in vivo. Glycosylates FGF23. This is Polypeptide N-acetylgalactosaminyltransferase 3 (GALNT3) from Homo sapiens (Human).